A 318-amino-acid polypeptide reads, in one-letter code: tRNA dimethylallyltransferase (318 aa).

Residue 13-20 participates in ATP binding; it reads GPTAVGKT. 15–20 serves as a coordination point for substrate; the sequence is TAVGKT. Residues 38–41 are interaction with substrate tRNA; the sequence is DSMQ.

Belongs to the IPP transferase family. Monomer. Requires Mg(2+) as cofactor.

It catalyses the reaction adenosine(37) in tRNA + dimethylallyl diphosphate = N(6)-dimethylallyladenosine(37) in tRNA + diphosphate. In terms of biological role, catalyzes the transfer of a dimethylallyl group onto the adenine at position 37 in tRNAs that read codons beginning with uridine, leading to the formation of N6-(dimethylallyl)adenosine (i(6)A). In Bacillus pumilus (strain SAFR-032), this protein is tRNA dimethylallyltransferase.